Here is a 674-residue protein sequence, read N- to C-terminus: DNA ligase (674 aa).

NAD(+) contacts are provided by residues 35–39 (DFEFD), 84–85 (SL), and E118. The active-site N6-AMP-lysine intermediate is the K120. Positions 141, 184, 297, and 321 each coordinate NAD(+). C415, C418, C433, and C439 together coordinate Zn(2+). Residues 598–674 (QVNRNFEGVT…VSEDEFEAML (77 aa)) form the BRCT domain.

This sequence belongs to the NAD-dependent DNA ligase family. LigA subfamily. Requires Mg(2+) as cofactor. It depends on Mn(2+) as a cofactor.

The enzyme catalyses NAD(+) + (deoxyribonucleotide)n-3'-hydroxyl + 5'-phospho-(deoxyribonucleotide)m = (deoxyribonucleotide)n+m + AMP + beta-nicotinamide D-nucleotide.. DNA ligase that catalyzes the formation of phosphodiester linkages between 5'-phosphoryl and 3'-hydroxyl groups in double-stranded DNA using NAD as a coenzyme and as the energy source for the reaction. It is essential for DNA replication and repair of damaged DNA. The protein is DNA ligase of Pelodictyon phaeoclathratiforme (strain DSM 5477 / BU-1).